Here is a 277-residue protein sequence, read N- to C-terminus: Large ribosomal subunit protein uL2 (277 aa).

Positions glycine 222 to lysine 277 are disordered.

It belongs to the universal ribosomal protein uL2 family. In terms of assembly, part of the 50S ribosomal subunit. Forms a bridge to the 30S subunit in the 70S ribosome.

Its function is as follows. One of the primary rRNA binding proteins. Required for association of the 30S and 50S subunits to form the 70S ribosome, for tRNA binding and peptide bond formation. It has been suggested to have peptidyltransferase activity; this is somewhat controversial. Makes several contacts with the 16S rRNA in the 70S ribosome. This chain is Large ribosomal subunit protein uL2, found in Brucella melitensis biotype 1 (strain ATCC 23456 / CCUG 17765 / NCTC 10094 / 16M).